The following is a 2799-amino-acid chain: Peramine synthetase ppzA (2799 aa).

The segment at 270 to 666 (QERCRLQPNA…VGRKDTQVKI (397 aa)) is adenylation 1. The Carrier 1 domain maps to 799-875 (QPLTGMERLL…DLSRQSRYIE (77 aa)). S836 is modified (O-(pantetheine 4'-phosphoryl)serine). The condensation stretch occupies residues 914-1327 (DAYPCTPLQE…ITILTTEDLE (414 aa)). An adenylation 2 region spans residues 1350–1743 (DKVQARPNAP…TLSFVRRKDT (394 aa)). A methylation (Met) domain region spans residues 1874-1970 (LEIGCGSGMM…EYLVKLIQDI (97 aa)). The Carrier 2 domain maps to 2290–2368 (SPTTDMEKEL…RLLLDCCCDD (79 aa)). The residue at position 2327 (S2327) is an O-(pantetheine 4'-phosphoryl)serine. Positions 2420–2737 (TVLLTGANGF…LADMLQDLED (318 aa)) are thiesterase (TE) domain.

The protein belongs to the NRP synthetase family. Pantetheine 4'-phosphate is required as a cofactor.

The enzyme catalyses (S)-1-pyrroline-5-carboxylate + L-arginine + S-adenosyl-L-methionine + 2 ATP = peramine + 2 AMP + S-adenosyl-L-homocysteine + 2 diphosphate + H2O + 2 H(+). Its pathway is secondary metabolite biosynthesis. Functionally, nonribosomal peptide synthetase; part of the gene cluster that mediates the biosynthesis of pyrrolopyrazines, secondary metabolites showing insecticidal activity. The single multifunctional NRPS ppzA is responsible for the biosynthesis of peramine. The condensation domain of ppzA is proposed to catalyze formation of a peptide bond between 1-pyrroline-5-carboxylate and arginine. The methylation domain of ppzA would catalyze the N-methylation of the alpha-amino group of arginine. The reductase domain is proposed to be responsible for reduction of the thioester and the cyclization to form an iminium ion resulting in release from the peptide synthetase. Deprotonation of this intermediate and oxidation of the pyrroline ring would give rise to peramine. This final oxidation to give the pyrrole functionality may be spontaneous. In Epichloe species that produce only peramine, the peramine synthetase gene is not localized in a gene cluster, in contrast to Metarhizium species that contain additional pyrrolopyrazine biosynthesis genes. The 2-oxoglutarate-Fe(II) type oxidoreductase ppzC hydroxylates peramine to yield the newly identified compound 8-hydroxyperamine whereas ppzD converts L-proline into trans-4-hydroxy-L-proline, a precursor of peramine biosynthesis. The protein is Peramine synthetase ppzA of Metarhizium majus (strain ARSEF 297).